The sequence spans 165 residues: Small ribosomal subunit protein bS16 (165 aa).

The segment at 84 to 165 (WTHGNNPEKG…EAPAEEAAEG (82 aa)) is disordered. Residues 89–130 (NPEKGKPGKKAQERLAERAQREEERKQAEADAKAAAEAEKAA) are compositionally biased toward basic and acidic residues. The span at 131-157 (AAEAAAAAAAAPAVEEAPAEEAPAAEA) shows a compositional bias: low complexity.

This sequence belongs to the bacterial ribosomal protein bS16 family.

This is Small ribosomal subunit protein bS16 from Caulobacter vibrioides (strain ATCC 19089 / CIP 103742 / CB 15) (Caulobacter crescentus).